The primary structure comprises 122 residues: Holo-[acyl-carrier-protein] synthase (122 aa).

Residues aspartate 8 and glutamate 60 each coordinate Mg(2+).

It belongs to the P-Pant transferase superfamily. AcpS family. Mg(2+) serves as cofactor.

It localises to the cytoplasm. The enzyme catalyses apo-[ACP] + CoA = holo-[ACP] + adenosine 3',5'-bisphosphate + H(+). Functionally, transfers the 4'-phosphopantetheine moiety from coenzyme A to a Ser of acyl-carrier-protein. The chain is Holo-[acyl-carrier-protein] synthase from Anaplasma phagocytophilum (strain HZ).